Reading from the N-terminus, the 279-residue chain is Vomeronasal type-1 receptor A8 (279 aa).

Topologically, residues 1-19 (MNKDHTLYCSVYIRNAFFS) are extracellular. A helical membrane pass occupies residues 20-40 (EIGIGISANSCLLLFHTFMFI). The Cytoplasmic portion of the chain corresponds to 41 to 49 (RGHRPRLTD). A helical membrane pass occupies residues 50-70 (LPIGFVALIHLVMLLLAAYIT). At 71–93 (EDFFMSSGGWDDITCKLVIFLHR) the chain is on the extracellular side. A disulfide bridge links Cys85 with Cys172. A helical transmembrane segment spans residues 94-114 (FFRSLSVCATCLLSVFQAIIL). The Cytoplasmic segment spans residues 115–134 (CPQSSHLAKLKQNSPHQLSY). Residues 135–155 (FFIFLSIFYTSISSQILIAAI) traverse the membrane as a helical segment. Over 156–159 (PTQN) the chain is Extracellular. N-linked (GlcNAc...) asparagine glycosylation is present at Asn159. Residues 160–180 (ITFVNLIYITNSCSFLPLSSS) traverse the membrane as a helical segment. Residues 181 to 187 (MQHTFST) lie on the Cytoplasmic side of the membrane. A helical membrane pass occupies residues 188-208 (LLTFRNVFVIGLMGLSTCYMA). The Extracellular portion of the chain corresponds to 209-238 (TLLCRHKTRSQRLQNSKLSPKATPEQRALR). Residues 239–259 (TILMLMSFFLLMSTFDSIISY) traverse the membrane as a helical segment. At 260–279 (SRTIITGKSTALLCPDSCRS) the chain is on the cytoplasmic side.

It belongs to the G-protein coupled receptor 1 family. Expressed in a subset of sensory neurons located in the apical layer of the vomeronasal organ.

It localises to the cell membrane. Its function is as follows. Putative pheromone receptor implicated in the regulation of social and reproductive behavior. The sequence is that of Vomeronasal type-1 receptor A8 from Mus musculus (Mouse).